The sequence spans 290 residues: D-tagatose-1,6-bisphosphate aldolase subunit KbaY (290 aa).

Aspartate 82 functions as the Proton donor in the catalytic mechanism. 2 residues coordinate Zn(2+): histidine 83 and histidine 180. Glycine 181 contributes to the dihydroxyacetone phosphate binding site. Histidine 208 provides a ligand contact to Zn(2+). Residues 209-211 (GAS) and 230-233 (NVAT) contribute to the dihydroxyacetone phosphate site.

This sequence belongs to the class II fructose-bisphosphate aldolase family. TagBP aldolase KbaY subfamily. Homotetramer. Forms a complex with KbaZ. Zn(2+) is required as a cofactor.

The catalysed reaction is D-tagatofuranose 1,6-bisphosphate = D-glyceraldehyde 3-phosphate + dihydroxyacetone phosphate. Its pathway is carbohydrate metabolism; D-tagatose 6-phosphate degradation; D-glyceraldehyde 3-phosphate and glycerone phosphate from D-tagatose 6-phosphate: step 2/2. Catalytic subunit of the tagatose-1,6-bisphosphate aldolase KbaYZ, which catalyzes the reversible aldol condensation of dihydroxyacetone phosphate (DHAP or glycerone-phosphate) with glyceraldehyde 3-phosphate (G3P) to produce tagatose 1,6-bisphosphate (TBP). Requires KbaZ subunit for full activity and stability. This is D-tagatose-1,6-bisphosphate aldolase subunit KbaY from Salmonella arizonae (strain ATCC BAA-731 / CDC346-86 / RSK2980).